The chain runs to 419 residues: Protein arginine N-methyltransferase 8-B (419 aa).

The segment covering 1 to 14 (MGLRHSSRCLLLRR) has biased composition (basic residues). The tract at residues 1 to 79 (MGLRHSSRCL…HTPHVSALSA (79 aa)) is disordered. A lipid anchor (N-myristoyl glycine) is attached at G2. Positions 33–63 (QHQQQQSISSIPSSQSLQPSPLPKPVTSVHH) are enriched in low complexity. An Omega-N-methylarginine modification is found at R83. Position 98 is an asymmetric dimethylarginine (R98). The SAM-dependent MTase PRMT-type domain occupies 98 to 402 (RDYYFDSYAH…RDLDFTFELD (305 aa)). Residues H111, R120, G144, 144-147 (GSGT), E166, and E195 contribute to the S-adenosyl-L-methionine site. Catalysis depends on residues E210 and E219.

It belongs to the class I-like SAM-binding methyltransferase superfamily. Protein arginine N-methyltransferase family. PRMT8 subfamily. As to quaternary structure, homodimer. Tetramer; individual homodimers associates to form a homotetramer. Homooctamer; individual homodimers associates to form a homooctamer and homooligomerization is required for proper localization to the cell membrane.

The protein resides in the cell membrane. The enzyme catalyses L-arginyl-[protein] + S-adenosyl-L-methionine = N(omega)-methyl-L-arginyl-[protein] + S-adenosyl-L-homocysteine + H(+). It carries out the reaction L-arginyl-[protein] + 2 S-adenosyl-L-methionine = N(omega),N(omega)-dimethyl-L-arginyl-[protein] + 2 S-adenosyl-L-homocysteine + 2 H(+). Its function is as follows. S-adenosyl-L-methionine-dependent and membrane-associated arginine methyltransferase that can both catalyze the formation of omega-N monomethylarginine (MMA) and asymmetrical dimethylarginine (aDMA). In Danio rerio (Zebrafish), this protein is Protein arginine N-methyltransferase 8-B (prmt8b).